The sequence spans 469 residues: ATP synthase subunit beta (469 aa).

156 to 163 (GGAGVGKT) contacts ATP.

The protein belongs to the ATPase alpha/beta chains family. F-type ATPases have 2 components, CF(1) - the catalytic core - and CF(0) - the membrane proton channel. CF(1) has five subunits: alpha(3), beta(3), gamma(1), delta(1), epsilon(1). CF(0) has three main subunits: a(1), b(2) and c(9-12). The alpha and beta chains form an alternating ring which encloses part of the gamma chain. CF(1) is attached to CF(0) by a central stalk formed by the gamma and epsilon chains, while a peripheral stalk is formed by the delta and b chains.

It is found in the cell membrane. The enzyme catalyses ATP + H2O + 4 H(+)(in) = ADP + phosphate + 5 H(+)(out). In terms of biological role, produces ATP from ADP in the presence of a proton gradient across the membrane. The catalytic sites are hosted primarily by the beta subunits. In Lactococcus lactis subsp. cremoris (strain SK11), this protein is ATP synthase subunit beta.